Reading from the N-terminus, the 505-residue chain is 2,3-bisphosphoglycerate-independent phosphoglycerate mutase (505 aa).

Mn(2+) is bound by residues aspartate 11 and serine 61. Serine 61 acts as the Phosphoserine intermediate in catalysis. Residues histidine 122, 152–153 (RD), arginine 184, arginine 190, 258–261 (RPDR), and lysine 331 each bind substrate. 5 residues coordinate Mn(2+): aspartate 396, histidine 400, aspartate 437, histidine 438, and histidine 455.

This sequence belongs to the BPG-independent phosphoglycerate mutase family. In terms of assembly, monomer. Mn(2+) is required as a cofactor.

The enzyme catalyses (2R)-2-phosphoglycerate = (2R)-3-phosphoglycerate. Its pathway is carbohydrate degradation; glycolysis; pyruvate from D-glyceraldehyde 3-phosphate: step 3/5. Its function is as follows. Catalyzes the interconversion of 2-phosphoglycerate and 3-phosphoglycerate. This chain is 2,3-bisphosphoglycerate-independent phosphoglycerate mutase, found in Mesomycoplasma hyopneumoniae (strain J / ATCC 25934 / NCTC 10110) (Mycoplasma hyopneumoniae).